The chain runs to 217 residues: Oxygen-evolving enhancer protein 3-1, chloroplastic (217 aa).

The transit peptide at 1–68 (MAQAMASMTG…GGALSQAARA (68 aa)) directs the protein to the chloroplast.

The protein belongs to the PsbQ family.

It is found in the plastid. The protein resides in the chloroplast thylakoid membrane. The polypeptide is Oxygen-evolving enhancer protein 3-1, chloroplastic (PSBQ1) (Zea mays (Maize)).